The sequence spans 217 residues: Ras-related protein Rab11B (217 aa).

21–28 (GDSGVGKS) provides a ligand contact to GTP. Residues 43–51 (SKSTIGVEF) carry the Effector region motif. GTP-binding positions include 69–73 (DTAGQ) and 127–130 (NKAD). S-geranylgeranyl cysteine attachment occurs at residues Cys214 and Cys215.

Belongs to the small GTPase superfamily. Rab family.

Its subcellular location is the cell membrane. This is Ras-related protein Rab11B (RAB11B) from Nicotiana tabacum (Common tobacco).